Here is a 271-residue protein sequence, read N- to C-terminus: Aliphatic sulfonates import ATP-binding protein SsuB (271 aa).

Residues 13 to 234 (ITLESIGKRY…RKGSAKLAAL (222 aa)) enclose the ABC transporter domain. 45 to 52 (GRSGCGKS) contacts ATP. The segment at 250 to 271 (EASRQGIKASRQGTATSRRVAN) is disordered. The span at 260 to 271 (RQGTATSRRVAN) shows a compositional bias: polar residues.

Belongs to the ABC transporter superfamily. Aliphatic sulfonates importer (TC 3.A.1.17.2) family. In terms of assembly, the complex is composed of two ATP-binding proteins (SsuB), two transmembrane proteins (SsuC) and a solute-binding protein (SsuA).

It localises to the cell inner membrane. It catalyses the reaction ATP + H2O + aliphatic sulfonate-[sulfonate-binding protein]Side 1 = ADP + phosphate + aliphatic sulfonateSide 2 + [sulfonate-binding protein]Side 1.. Its function is as follows. Part of the ABC transporter complex SsuABC involved in aliphatic sulfonates import. Responsible for energy coupling to the transport system. The polypeptide is Aliphatic sulfonates import ATP-binding protein SsuB (Yersinia pestis bv. Antiqua (strain Antiqua)).